Consider the following 126-residue polypeptide: Holo-[acyl-carrier-protein] synthase (126 aa).

Residues aspartate 9 and glutamate 58 each coordinate Mg(2+).

This sequence belongs to the P-Pant transferase superfamily. AcpS family. Mg(2+) is required as a cofactor.

The protein localises to the cytoplasm. It catalyses the reaction apo-[ACP] + CoA = holo-[ACP] + adenosine 3',5'-bisphosphate + H(+). Functionally, transfers the 4'-phosphopantetheine moiety from coenzyme A to a Ser of acyl-carrier-protein. This Buchnera aphidicola subsp. Cinara cedri (strain Cc) protein is Holo-[acyl-carrier-protein] synthase.